The following is a 330-amino-acid chain: SUMO-activating enzyme subunit 1 (330 aa).

It belongs to the ubiquitin-activating E1 family. As to quaternary structure, heterodimer of sae1 and sae2. The complex binds sumo via sae2.

Its subcellular location is the nucleus. Its pathway is protein modification; protein sumoylation. In terms of biological role, the dimeric enzyme acts as an E1 ligase for sumo. It mediates ATP-dependent activation of sumo and formation of a thioester with a conserved cysteine residue on sae2. The protein is SUMO-activating enzyme subunit 1 (sae1) of Dictyostelium discoideum (Social amoeba).